We begin with the raw amino-acid sequence, 287 residues long: Shikimate dehydrogenase (NADP(+)) (287 aa).

Residues 20–22 and T67 each bind shikimate; that span reads SRS. K71 acts as the Proton acceptor in catalysis. NADP(+) is bound at residue E84. Shikimate-binding residues include N93 and D108. NADP(+)-binding positions include 132–136, 156–161, and M226; these read GAGGA and NRTAAR. A shikimate-binding site is contributed by Y228. Residue G250 participates in NADP(+) binding.

It belongs to the shikimate dehydrogenase family. Homodimer.

It catalyses the reaction shikimate + NADP(+) = 3-dehydroshikimate + NADPH + H(+). The protein operates within metabolic intermediate biosynthesis; chorismate biosynthesis; chorismate from D-erythrose 4-phosphate and phosphoenolpyruvate: step 4/7. Involved in the biosynthesis of the chorismate, which leads to the biosynthesis of aromatic amino acids. Catalyzes the reversible NADPH linked reduction of 3-dehydroshikimate (DHSA) to yield shikimate (SA). The sequence is that of Shikimate dehydrogenase (NADP(+)) from Bordetella pertussis (strain Tohama I / ATCC BAA-589 / NCTC 13251).